Consider the following 1369-residue polypeptide: Phosphoribosylformylglycinamidine synthase (1369 aa).

Disordered regions lie at residues 321 to 352 (HPTA…AKPK) and 373 to 400 (ENAR…KPDR). Residue 330–341 (GASTGAGGEIRD) coordinates ATP. Ala721 is a binding site for ATP. Asp722, Glu761, Asn765, and Asp934 together coordinate Mg(2+). ATP is bound at residue Ser936. In terms of domain architecture, Glutamine amidotransferase type-1 spans 1116–1369 (MAILREQGVN…MFRNARKQMG (254 aa)). Cys1209 (nucleophile) is an active-site residue. Catalysis depends on residues His1330 and Glu1332.

The protein in the N-terminal section; belongs to the FGAMS family. As to quaternary structure, monomer.

It is found in the cytoplasm. The enzyme catalyses N(2)-formyl-N(1)-(5-phospho-beta-D-ribosyl)glycinamide + L-glutamine + ATP + H2O = 2-formamido-N(1)-(5-O-phospho-beta-D-ribosyl)acetamidine + L-glutamate + ADP + phosphate + H(+). It participates in purine metabolism; IMP biosynthesis via de novo pathway; 5-amino-1-(5-phospho-D-ribosyl)imidazole from N(2)-formyl-N(1)-(5-phospho-D-ribosyl)glycinamide: step 1/2. Functionally, phosphoribosylformylglycinamidine synthase involved in the purines biosynthetic pathway. Catalyzes the ATP-dependent conversion of formylglycinamide ribonucleotide (FGAR) and glutamine to yield formylglycinamidine ribonucleotide (FGAM) and glutamate. This chain is Phosphoribosylformylglycinamidine synthase, found in Ralstonia nicotianae (strain ATCC BAA-1114 / GMI1000) (Ralstonia solanacearum).